The chain runs to 1407 residues: DNA-directed RNA polymerase subunit beta' (1407 aa).

Cys70, Cys72, Cys85, and Cys88 together coordinate Zn(2+). Residues Asp460, Asp462, and Asp464 each contribute to the Mg(2+) site. Positions 814, 888, 895, and 898 each coordinate Zn(2+). At Lys972 the chain carries N6-acetyllysine.

The protein belongs to the RNA polymerase beta' chain family. The RNAP catalytic core consists of 2 alpha, 1 beta, 1 beta' and 1 omega subunit. When a sigma factor is associated with the core the holoenzyme is formed, which can initiate transcription. The cofactor is Mg(2+). Zn(2+) serves as cofactor.

The catalysed reaction is RNA(n) + a ribonucleoside 5'-triphosphate = RNA(n+1) + diphosphate. In terms of biological role, DNA-dependent RNA polymerase catalyzes the transcription of DNA into RNA using the four ribonucleoside triphosphates as substrates. The sequence is that of DNA-directed RNA polymerase subunit beta' from Shigella boydii serotype 18 (strain CDC 3083-94 / BS512).